The primary structure comprises 689 residues: Protein arginine N-methyltransferase 7 (689 aa).

SAM-dependent MTase PRMT-type domains are found at residues 14 to 344 and 359 to 685; these read SLEW…YSVW and DARV…IAMD. Catalysis depends on residues Glu-144 and Glu-153.

Belongs to the class I-like SAM-binding methyltransferase superfamily. Protein arginine N-methyltransferase family. PRMT7 subfamily.

The protein resides in the cytoplasm. It is found in the cytosol. The protein localises to the nucleus. The catalysed reaction is L-arginyl-[protein] + S-adenosyl-L-methionine = N(omega)-methyl-L-arginyl-[protein] + S-adenosyl-L-homocysteine + H(+). Arginine methyltransferase that can both catalyze the formation of omega-N monomethylarginine (MMA) and symmetrical dimethylarginine (sDMA), with a preference for the formation of MMA. Specifically mediates the symmetrical dimethylation of arginine residues in the small nuclear ribonucleoproteins Sm D1 (SNRPD1) and Sm D3 (SNRPD3); such methylation being required for the assembly and biogenesis of snRNP core particles. Specifically mediates the symmetric dimethylation of histone H4 'Arg-3' to form H4R3me2s. Plays a role in gene imprinting by being recruited by CTCFL at the H19 imprinted control region (ICR) and methylating histone H4 to form H4R3me2s, possibly leading to recruit DNA methyltransferases at these sites. May also play a role in embryonic stem cell (ESC) pluripotency. Also able to mediate the arginine methylation of histone H2A and myelin basic protein (MBP) in vitro; the relevance of such results is however unclear in vivo. The polypeptide is Protein arginine N-methyltransferase 7 (PRMT7) (Gallus gallus (Chicken)).